Consider the following 1485-residue polypeptide: Putative E3 ubiquitin-protein ligase LIN-2 (1485 aa).

The segment covering 337–353 (EENEDDSDSELDNESVD) has biased composition (acidic residues). Disordered stretches follow at residues 337-363 (EENE…IFSP), 384-450 (NQIP…ISNA), and 462-507 (RKND…KLSM). The span at 438-450 (SSPDISIDNISNA) shows a compositional bias: low complexity. Over residues 466 to 484 (SQTPSMNQDNENSLVLNDS) the composition is skewed to polar residues. The region spanning 510–585 (KPPKDFVCPI…TSWKEQNPEL (76 aa)) is the U-box domain. 4 WD repeats span residues 1194-1232 (SCKE…KVCD), 1246-1283 (EHTK…IKCI), 1409-1448 (SLST…RVAS), and 1454-1485 (GHTK…WALD).

The enzyme catalyses S-ubiquitinyl-[E2 ubiquitin-conjugating enzyme]-L-cysteine + [acceptor protein]-L-lysine = [E2 ubiquitin-conjugating enzyme]-L-cysteine + N(6)-ubiquitinyl-[acceptor protein]-L-lysine.. Its pathway is protein modification; protein ubiquitination. Putative E3 ubiquitin-protein ligase involved in the rhizobial infection process. Plays an important role in the early steps of infection thread formation and in growth and differentiation of nodules. The polypeptide is Putative E3 ubiquitin-protein ligase LIN-2 (Lotus japonicus (Lotus corniculatus var. japonicus)).